The sequence spans 679 residues: Protein FAM178B (679 aa).

The segment at 70–113 (PLDQGPRCPARRPCSPASAPAPTSPKKPKIQAPGETFPTDWSPP) is disordered. The segment covering 75–90 (PRCPARRPCSPASAPA) has biased composition (low complexity).

It belongs to the FAM178 family.

The polypeptide is Protein FAM178B (Homo sapiens (Human)).